A 508-amino-acid polypeptide reads, in one-letter code: Aldehyde dehydrogenase family 7 member A1 (508 aa).

244 to 249 (GSSKVG) is an NAD(+) binding site. Residue glutamate 266 is the Proton acceptor of the active site. Residue cysteine 300 is the Nucleophile of the active site.

The protein belongs to the aldehyde dehydrogenase family. As to quaternary structure, homotetramer.

The enzyme catalyses an aldehyde + NAD(+) + H2O = a carboxylate + NADH + 2 H(+). May play a role in fruit development. The sequence is that of Aldehyde dehydrogenase family 7 member A1 from Malus domestica (Apple).